The chain runs to 415 residues: FXa-directed anticoagulant (415 aa).

An N-terminal signal peptide occupies residues 1 to 17 (MYLKIVILVTFPLVCFT). N117, N166, N216, and N320 each carry an N-linked (GlcNAc...) asparagine glycan.

This sequence belongs to the serpin family. (Microbial infection) Interacts with Zika virus envelope protein E and Zika virus-like particles; the interaction does not affect Zika virus replication in human endothelial cells and keratinocytes. The N-terminus is blocked. As to expression, female salivary gland (at protein level). Not detected in female carcass without head and salivary glands. Not detected in male tissues.

Its subcellular location is the secreted. Functionally, anticoagulant serpin-type protein inhibiting host coagulation factor Xa (F10). Does not inhibit host thrombin (F2) and trypsin. In terms of biological role, (Microbial infection) Does not affect Zika virus replication in human endothelial cells and keratinocytes. This is FXa-directed anticoagulant from Aedes aegypti (Yellowfever mosquito).